A 396-amino-acid polypeptide reads, in one-letter code: S-adenosylmethionine synthase (396 aa).

Position 12 (Glu-12) interacts with Mg(2+). Residue His-18 coordinates ATP. Residue Glu-46 coordinates K(+). Positions 59 and 102 each coordinate L-methionine. ATP-binding positions include 170 to 172 (DGK), 238 to 241 (SGRF), Asp-249, 255 to 256 (RK), Ala-272, Lys-276, and Lys-280. An L-methionine-binding site is contributed by Asp-249. Lys-280 contacts L-methionine.

This sequence belongs to the AdoMet synthase family. As to quaternary structure, homotetramer. The cofactor is Mn(2+). Mg(2+) is required as a cofactor. Requires Co(2+) as cofactor. It depends on K(+) as a cofactor.

Its subcellular location is the cytoplasm. It catalyses the reaction L-methionine + ATP + H2O = S-adenosyl-L-methionine + phosphate + diphosphate. Its pathway is amino-acid biosynthesis; S-adenosyl-L-methionine biosynthesis; S-adenosyl-L-methionine from L-methionine: step 1/1. Catalyzes the formation of S-adenosylmethionine from methionine and ATP. The reaction comprises two steps that are both catalyzed by the same enzyme: formation of S-adenosylmethionine (AdoMet) and triphosphate, and subsequent hydrolysis of the triphosphate. The protein is S-adenosylmethionine synthase (SAMS) of Triticum aestivum (Wheat).